We begin with the raw amino-acid sequence, 119 residues long: Holo-[acyl-carrier-protein] synthase (119 aa).

Mg(2+)-binding residues include Asp-8 and Glu-58.

The protein belongs to the P-Pant transferase superfamily. AcpS family. It depends on Mg(2+) as a cofactor.

The protein localises to the cytoplasm. It catalyses the reaction apo-[ACP] + CoA = holo-[ACP] + adenosine 3',5'-bisphosphate + H(+). Its function is as follows. Transfers the 4'-phosphopantetheine moiety from coenzyme A to a Ser of acyl-carrier-protein. This is Holo-[acyl-carrier-protein] synthase from Geobacillus sp. (strain WCH70).